The primary structure comprises 279 residues: Urease accessory protein UreD (279 aa).

Belongs to the UreD family. As to quaternary structure, ureD, UreF and UreG form a complex that acts as a GTP-hydrolysis-dependent molecular chaperone, activating the urease apoprotein by helping to assemble the nickel containing metallocenter of UreC. The UreE protein probably delivers the nickel.

Its subcellular location is the cytoplasm. In terms of biological role, required for maturation of urease via the functional incorporation of the urease nickel metallocenter. This is Urease accessory protein UreD from Paracoccus denitrificans (strain Pd 1222).